The sequence spans 436 residues: Protein arginine methyltransferase NDUFAF7, mitochondrial (436 aa).

The N-terminal 41 residues, 1–41, are a transit peptide targeting the mitochondrion; the sequence is MNALVRRCVARTGIPSIWRRKCFSSGNEPAESNHVTPMLRH. The segment at 413 to 436 is disordered; that stretch reads QGGKACQSEAPSTSVPGFDELVWH.

It belongs to the NDUFAF7 family. Interacts with NDUFS2.

It localises to the mitochondrion. The enzyme catalyses L-arginyl-[protein] + 2 S-adenosyl-L-methionine = N(omega),N(omega)'-dimethyl-L-arginyl-[protein] + 2 S-adenosyl-L-homocysteine + 2 H(+). Its function is as follows. Arginine methyltransferase involved in the assembly or stability of mitochondrial NADH:ubiquinone oxidoreductase complex (complex I). Acts by mediating symmetric dimethylation of 'Arg-118' of NDUFS2 after it assembles into the complex I, stabilizing the early intermediate complex. In Rattus norvegicus (Rat), this protein is Protein arginine methyltransferase NDUFAF7, mitochondrial.